The primary structure comprises 508 residues: Endoglucanase 6 (508 aa).

Residues Met-1 to Gly-33 form the signal peptide. The active-site Nucleophile is the Asp-89. Active-site residues include His-419, Asp-471, and Glu-480.

The protein belongs to the glycosyl hydrolase 9 (cellulase E) family.

The protein localises to the secreted. It carries out the reaction Endohydrolysis of (1-&gt;4)-beta-D-glucosidic linkages in cellulose, lichenin and cereal beta-D-glucans.. The polypeptide is Endoglucanase 6 (Oryza sativa subsp. japonica (Rice)).